A 328-amino-acid polypeptide reads, in one-letter code: 4-hydroxy-3-methylbut-2-enyl diphosphate reductase (328 aa).

C24 provides a ligand contact to [4Fe-4S] cluster. 2 residues coordinate (2E)-4-hydroxy-3-methylbut-2-enyl diphosphate: H55 and H88. The dimethylallyl diphosphate site is built by H55 and H88. Isopentenyl diphosphate contacts are provided by H55 and H88. C110 is a binding site for [4Fe-4S] cluster. H138 provides a ligand contact to (2E)-4-hydroxy-3-methylbut-2-enyl diphosphate. Dimethylallyl diphosphate is bound at residue H138. An isopentenyl diphosphate-binding site is contributed by H138. E140 acts as the Proton donor in catalysis. Residue T178 coordinates (2E)-4-hydroxy-3-methylbut-2-enyl diphosphate. Position 208 (C208) interacts with [4Fe-4S] cluster. (2E)-4-hydroxy-3-methylbut-2-enyl diphosphate contacts are provided by S236, S237, N238, and S279. Positions 236, 237, 238, and 279 each coordinate dimethylallyl diphosphate. Residues S236, S237, N238, and S279 each contribute to the isopentenyl diphosphate site.

The protein belongs to the IspH family. [4Fe-4S] cluster serves as cofactor.

It carries out the reaction isopentenyl diphosphate + 2 oxidized [2Fe-2S]-[ferredoxin] + H2O = (2E)-4-hydroxy-3-methylbut-2-enyl diphosphate + 2 reduced [2Fe-2S]-[ferredoxin] + 2 H(+). The enzyme catalyses dimethylallyl diphosphate + 2 oxidized [2Fe-2S]-[ferredoxin] + H2O = (2E)-4-hydroxy-3-methylbut-2-enyl diphosphate + 2 reduced [2Fe-2S]-[ferredoxin] + 2 H(+). It participates in isoprenoid biosynthesis; dimethylallyl diphosphate biosynthesis; dimethylallyl diphosphate from (2E)-4-hydroxy-3-methylbutenyl diphosphate: step 1/1. The protein operates within isoprenoid biosynthesis; isopentenyl diphosphate biosynthesis via DXP pathway; isopentenyl diphosphate from 1-deoxy-D-xylulose 5-phosphate: step 6/6. Catalyzes the conversion of 1-hydroxy-2-methyl-2-(E)-butenyl 4-diphosphate (HMBPP) into a mixture of isopentenyl diphosphate (IPP) and dimethylallyl diphosphate (DMAPP). Acts in the terminal step of the DOXP/MEP pathway for isoprenoid precursor biosynthesis. In Ehrlichia ruminantium (strain Welgevonden), this protein is 4-hydroxy-3-methylbut-2-enyl diphosphate reductase.